Reading from the N-terminus, the 334-residue chain is Probable 3-hydroxyisobutyrate dehydrogenase-like 1, mitochondrial (334 aa).

A mitochondrion-targeting transit peptide spans 1–23 (MPLLLRRFPSPSVVSSFFLRRSM). Ala-24 bears the N-acetylalanine mark. NAD(+) contacts are provided by residues 38–67 (TKIGWIGTGVMGRSMCGHLIKAGYTVTVFN) and Thr-133. The active site involves Lys-207. Lys-275 serves as a coordination point for NAD(+).

It belongs to the HIBADH-related family. 3-hydroxyisobutyrate dehydrogenase subfamily.

Its subcellular location is the mitochondrion. It catalyses the reaction 3-hydroxy-2-methylpropanoate + NAD(+) = 2-methyl-3-oxopropanoate + NADH + H(+). Its pathway is amino-acid degradation; L-valine degradation. The sequence is that of Probable 3-hydroxyisobutyrate dehydrogenase-like 1, mitochondrial from Arabidopsis thaliana (Mouse-ear cress).